The primary structure comprises 444 residues: 23S rRNA (uracil(1939)-C(5))-methyltransferase RlmD (444 aa).

Positions 5–67 (RSRIDRTPFQ…RHFDEARTVE (63 aa)) constitute a TRAM domain. Positions 80, 86, 89, and 168 each coordinate [4Fe-4S] cluster. Q276, F305, N310, E326, D353, and D374 together coordinate S-adenosyl-L-methionine. Catalysis depends on C400, which acts as the Nucleophile.

This sequence belongs to the class I-like SAM-binding methyltransferase superfamily. RNA M5U methyltransferase family. RlmD subfamily.

The enzyme catalyses uridine(1939) in 23S rRNA + S-adenosyl-L-methionine = 5-methyluridine(1939) in 23S rRNA + S-adenosyl-L-homocysteine + H(+). Its function is as follows. Catalyzes the formation of 5-methyl-uridine at position 1939 (m5U1939) in 23S rRNA. This Stenotrophomonas maltophilia (strain R551-3) protein is 23S rRNA (uracil(1939)-C(5))-methyltransferase RlmD.